Reading from the N-terminus, the 572-residue chain is Arginine--tRNA ligase (572 aa).

The short motif at 122-132 (PNLAKEMHVGH) is the 'HIGH' region element.

Belongs to the class-I aminoacyl-tRNA synthetase family. As to quaternary structure, monomer.

The protein resides in the cytoplasm. The enzyme catalyses tRNA(Arg) + L-arginine + ATP = L-arginyl-tRNA(Arg) + AMP + diphosphate. The polypeptide is Arginine--tRNA ligase (Neisseria meningitidis serogroup B (strain ATCC BAA-335 / MC58)).